A 479-amino-acid chain; its full sequence is Sulfate adenylyltransferase subunit 1 (479 aa).

Residues 25-239 (KSLLRFLTCG…EVLETVDIQR (215 aa)) enclose the tr-type G domain. Residues 34-41 (GSVDDGKS) are G1. 34 to 41 (GSVDDGKS) is a binding site for GTP. Positions 92–96 (GITID) are G2. Residues 113 to 116 (DTPG) are G3. GTP-binding positions include 113–117 (DTPGH) and 168–171 (NKMD). Residues 168 to 171 (NKMD) are G4. The G5 stretch occupies residues 206 to 208 (SAL).

This sequence belongs to the TRAFAC class translation factor GTPase superfamily. Classic translation factor GTPase family. CysN/NodQ subfamily. In terms of assembly, heterodimer composed of CysD, the smaller subunit, and CysN.

The enzyme catalyses sulfate + ATP + H(+) = adenosine 5'-phosphosulfate + diphosphate. It functions in the pathway sulfur metabolism; hydrogen sulfide biosynthesis; sulfite from sulfate: step 1/3. Functionally, with CysD forms the ATP sulfurylase (ATPS) that catalyzes the adenylation of sulfate producing adenosine 5'-phosphosulfate (APS) and diphosphate, the first enzymatic step in sulfur assimilation pathway. APS synthesis involves the formation of a high-energy phosphoric-sulfuric acid anhydride bond driven by GTP hydrolysis by CysN coupled to ATP hydrolysis by CysD. This is Sulfate adenylyltransferase subunit 1 from Salmonella choleraesuis (strain SC-B67).